The chain runs to 133 residues: Putative dispanin subfamily A member 2d (133 aa).

The Extracellular portion of the chain corresponds to 1–57; sequence MNHTVQTFFSPVNSGQPPNYEMLKEEHKVAVLGVPHNPAPPTSTVIHIRSKTSVPHH. Lysine 24 participates in a covalent cross-link: Glycyl lysine isopeptide (Lys-Gly) (interchain with G-Cter in ubiquitin). A helical membrane pass occupies residues 58 to 78; the sequence is VVWSLFNTLFMNPCCLGFIAF. Residues 79-107 are Cytoplasmic-facing; it reads AYSVKSRDRKMVGNVTGAQAYASTTKCLN. Glycyl lysine isopeptide (Lys-Gly) (interchain with G-Cter in ubiquitin) cross-links involve residues lysine 83, lysine 88, and lysine 104. A helical membrane pass occupies residues 108-128; that stretch reads IWALILGILMTILLIIIPVLI. At 129–133 the chain is on the extracellular side; the sequence is FQAHR.

It belongs to the CD225/Dispanin family.

It is found in the membrane. The sequence is that of Putative dispanin subfamily A member 2d from Homo sapiens (Human).